A 458-amino-acid chain; its full sequence is Probable multidrug resistance protein NorM (458 aa).

Transmembrane regions (helical) follow at residues 21-43, 58-80, 101-123, 138-160, 167-189, 199-221, 251-273, 288-310, 323-345, 360-382, 395-417, and 427-445; these read TGLL…FVDN, TIGT…SLTA, ALWL…PPLL, AFLH…RYLS, LPTM…ALTY, AEGL…ALYL, GLPI…LLIG, NVAQ…RVGH, AAWA…LLLG, AALA…IQVL, VPMF…GLGL, and WVGL…GLRF.

This sequence belongs to the multi antimicrobial extrusion (MATE) (TC 2.A.66.1) family.

It localises to the cell inner membrane. Functionally, multidrug efflux pump. This chain is Probable multidrug resistance protein NorM (norM), found in Xanthomonas axonopodis pv. citri (strain 306).